The primary structure comprises 611 residues: Leukotriene A-4 hydrolase (611 aa).

Lys73 carries the N6-acetyllysine modification. Residues 135–137 (QCQ) and 267–272 (SYGGME) each bind a peptide. His296 lines the Zn(2+) pocket. Glu297 serves as the catalytic Proton acceptor. Zn(2+) is bound by residues His300 and Glu319. The residue at position 337 (Lys337) is an N6-acetyllysine. Tyr384 functions as the Proton donor in the catalytic mechanism. Position 414 is an N6-acetyllysine (Lys414). Position 416 is a phosphoserine (Ser416). Residue 564 to 566 (RMK) participates in a peptide binding. Lys573 is modified (N6-acetyllysine).

Belongs to the peptidase M1 family. In terms of assembly, monomer. Requires Zn(2+) as cofactor. Post-translationally, phosphorylation at Ser-416 inhibits leukotriene-A4 hydrolase activity. activity.

It localises to the cytoplasm. It carries out the reaction leukotriene A4 + H2O = leukotriene B4. The catalysed reaction is (5S,6S)-epoxy-(18R)-hydroxy-(7E,9E,11Z,14Z,16E)-eicosapentaenoate + H2O = resolvin E1. It catalyses the reaction (5S,6S)-epoxy-(18S)-hydroxy-(7E,9E,11Z,14Z,16E)-eicosapentaenoate + H2O = 18S-resolvin E1. The enzyme catalyses Release of the N-terminal residue from a tripeptide.. The protein operates within lipid metabolism; leukotriene B4 biosynthesis. Inhibited by bestatin. The epoxide hydrolase activity is restrained by suicide inactivation that involves binding of LTA4 to Tyr-379. 4-(4-benzylphenyl)thiazol-2-amine (ARM1) selectively inhibits the epoxide hydrolase activity. In terms of biological role, bifunctional zinc metalloenzyme that comprises both epoxide hydrolase (EH) and aminopeptidase activities. Acts as an epoxide hydrolase to catalyze the conversion of LTA4 to the pro-inflammatory mediator leukotriene B4 (LTB4). Also has aminopeptidase activity, with high affinity for N-terminal arginines of various synthetic tripeptides. In addition to its pro-inflammatory EH activity, may also counteract inflammation by its aminopeptidase activity, which inactivates by cleavage another neutrophil attractant, the tripeptide Pro-Gly-Pro (PGP), a bioactive fragment of collagen generated by the action of matrix metalloproteinase-9 (MMP9) and prolylendopeptidase (PREPL). Involved also in the biosynthesis of resolvin E1 and 18S-resolvin E1 from eicosapentaenoic acid, two lipid mediators that show potent anti-inflammatory and pro-resolving actions. The chain is Leukotriene A-4 hydrolase (LTA4H) from Cavia porcellus (Guinea pig).